The primary structure comprises 101 residues: Interleukin-8 (101 aa).

An N-terminal signal peptide occupies residues 1 to 22 (MTSKLAVALLAAFLLSAALCEA). R27 is modified (citrulline). 2 cysteine pairs are disulfide-bonded: C34-C61 and C36-C77.

It belongs to the intercrine alpha (chemokine CxC) family. Homodimer. Interacts with TNFAIP6 (via Link domain); this interaction interferes with chemokine binding to glycosaminoglycans. Citrullination at Arg-27 prevents proteolysis, and dampens tissue inflammation, it also enhances leukocytosis, possibly through impaired chemokine clearance from the blood circulation.

The protein localises to the secreted. Chemotactic factor that mediates inflammatory response by attracting neutrophils, basophils, and T-cells to clear pathogens and protect the host from infection. Also plays an important role in neutrophil activation. Released in response to an inflammatory stimulus, exerts its effect by binding to the G-protein-coupled receptors CXCR1 and CXCR2, primarily found in neutrophils, monocytes and endothelial cells. G-protein heterotrimer (alpha, beta, gamma subunits) constitutively binds to CXCR1/CXCR2 receptor and activation by IL8 leads to beta and gamma subunits release from Galpha (GNAI2 in neutrophils) and activation of several downstream signaling pathways including PI3K and MAPK pathways. The protein is Interleukin-8 (CXCL8) of Ovis aries (Sheep).